The chain runs to 254 residues: Leucyl/phenylalanyl-tRNA--protein transferase (254 aa).

Belongs to the L/F-transferase family.

The protein localises to the cytoplasm. The catalysed reaction is N-terminal L-lysyl-[protein] + L-leucyl-tRNA(Leu) = N-terminal L-leucyl-L-lysyl-[protein] + tRNA(Leu) + H(+). It carries out the reaction N-terminal L-arginyl-[protein] + L-leucyl-tRNA(Leu) = N-terminal L-leucyl-L-arginyl-[protein] + tRNA(Leu) + H(+). It catalyses the reaction L-phenylalanyl-tRNA(Phe) + an N-terminal L-alpha-aminoacyl-[protein] = an N-terminal L-phenylalanyl-L-alpha-aminoacyl-[protein] + tRNA(Phe). Functionally, functions in the N-end rule pathway of protein degradation where it conjugates Leu, Phe and, less efficiently, Met from aminoacyl-tRNAs to the N-termini of proteins containing an N-terminal arginine or lysine. The protein is Leucyl/phenylalanyl-tRNA--protein transferase of Burkholderia vietnamiensis (strain G4 / LMG 22486) (Burkholderia cepacia (strain R1808)).